The following is a 133-amino-acid chain: Small ribosomal subunit protein uS8 (133 aa).

This sequence belongs to the universal ribosomal protein uS8 family. Part of the 30S ribosomal subunit. Contacts proteins S5 and S12.

In terms of biological role, one of the primary rRNA binding proteins, it binds directly to 16S rRNA central domain where it helps coordinate assembly of the platform of the 30S subunit. The sequence is that of Small ribosomal subunit protein uS8 from Prochlorococcus marinus (strain MIT 9313).